The sequence spans 584 residues: Alkaline nuclease (584 aa).

The interval 409 to 429 (GGGADHHLRGSPGDSPPPIPF) is disordered.

This sequence belongs to the herpesviridae alkaline nuclease family. As to quaternary structure, interacts with major DNA-binding protein; this interaction increases the nuclease processivity of the alkaline exonuclease.

It localises to the host nucleus. The protein localises to the host cytoplasm. Plays a role in processing non linear or branched viral DNA intermediates in order to promote the production of mature packaged unit-length linear progeny viral DNA molecules. Exhibits endonuclease and exonuclease activities and accepts both double-stranded and single-stranded DNA as substrate. Exonuclease digestion of DNA is in the 5'-&gt; 3' direction and the products are 5'-monophosphate nucleosides. Additionally, forms a recombinase with the major DNA-binding protein, which displays strand exchange activity. This is Alkaline nuclease (UL98) from Homo sapiens (Human).